We begin with the raw amino-acid sequence, 125 residues long: Small ribosomal subunit protein uS12 (125 aa).

Residue D89 is modified to 3-methylthioaspartic acid.

The protein belongs to the universal ribosomal protein uS12 family. In terms of assembly, part of the 30S ribosomal subunit. Contacts proteins S8 and S17. May interact with IF1 in the 30S initiation complex.

In terms of biological role, with S4 and S5 plays an important role in translational accuracy. Functionally, interacts with and stabilizes bases of the 16S rRNA that are involved in tRNA selection in the A site and with the mRNA backbone. Located at the interface of the 30S and 50S subunits, it traverses the body of the 30S subunit contacting proteins on the other side and probably holding the rRNA structure together. The combined cluster of proteins S8, S12 and S17 appears to hold together the shoulder and platform of the 30S subunit. This chain is Small ribosomal subunit protein uS12, found in Clostridium botulinum (strain ATCC 19397 / Type A).